A 213-amino-acid chain; its full sequence is Orotate phosphoribosyltransferase (213 aa).

5-phospho-alpha-D-ribose 1-diphosphate is bound at residue K26. Orotate is bound at residue 34 to 35 (FF). Residues 72–73 (YK), R99, K100, K103, H105, and 124–132 (DDVITAGTA) each bind 5-phospho-alpha-D-ribose 1-diphosphate. Orotate is bound by residues T128 and R156.

It belongs to the purine/pyrimidine phosphoribosyltransferase family. PyrE subfamily. In terms of assembly, homodimer. Mg(2+) serves as cofactor.

The catalysed reaction is orotidine 5'-phosphate + diphosphate = orotate + 5-phospho-alpha-D-ribose 1-diphosphate. It functions in the pathway pyrimidine metabolism; UMP biosynthesis via de novo pathway; UMP from orotate: step 1/2. Catalyzes the transfer of a ribosyl phosphate group from 5-phosphoribose 1-diphosphate to orotate, leading to the formation of orotidine monophosphate (OMP). The sequence is that of Orotate phosphoribosyltransferase from Enterobacter sp. (strain 638).